The chain runs to 1226 residues: Chitin synthase IV (1226 aa).

Positions 1–205 (MSLPERPGGS…SRKNPATAEQ (205 aa)) are disordered. Polar residues predominate over residues 49 to 65 (SVSSYAETISNPHANTE). Positions 66–75 (TLPLSPTHPT) are enriched in low complexity. The span at 94-107 (IRPERNRIDKDHRN) shows a compositional bias: basic and acidic residues. The segment covering 134 to 151 (DVSTEPSGGSQTHGSFAD) has biased composition (polar residues). Residues 163 to 172 (MSGDDQEKGN) are compositionally biased toward basic and acidic residues. The span at 173–198 (TRVKSRPRRSKSGKITKETRHRKSRK) shows a compositional bias: basic residues. Residues 246-266 (MGLISIILVIMAIVGFLTFGF) form a helical membrane-spanning segment. Residues N381, N421, and N443 are each glycosylated (N-linked (GlcNAc...) asparagine). The helical transmembrane segment at 516–536 (ILILSVVGTRFVLALIFQWFI) threads the bilayer. Positions 572–671 (LPGDVGSSAM…PGPAGFIHDS (100 aa)) are disordered. Polar residues-rich tracts occupy residues 580–601 (AMGS…TSRF) and 618–643 (TTMS…NDSR). A glycan (N-linked (GlcNAc...) asparagine) is linked at N640. The span at 649 to 666 (PDPYSSAASPSDGPGPAG) shows a compositional bias: low complexity. N-linked (GlcNAc...) asparagine glycans are attached at residues N787 and N1035. Helical transmembrane passes span 1060–1080 (FVVF…AFTF), 1094–1114 (IIPL…ILVT), and 1118–1138 (WSYV…NFVL).

The protein belongs to the chitin synthase family. Class IV subfamily. In terms of tissue distribution, highly expressed in conidia.

It is found in the cell membrane. The catalysed reaction is [(1-&gt;4)-N-acetyl-beta-D-glucosaminyl](n) + UDP-N-acetyl-alpha-D-glucosamine = [(1-&gt;4)-N-acetyl-beta-D-glucosaminyl](n+1) + UDP + H(+). Its function is as follows. Polymerizes chitin, a structural polymer of the cell wall and septum, by transferring the sugar moiety of UDP-GlcNAc to the non-reducing end of the growing chitin polymer. Contributes to the production of conidia and the ability of fungal conidia to germinate. Involved in fungal stress tolerances. The protein is Chitin synthase IV of Metarhizium acridum (strain CQMa 102).